The primary structure comprises 663 residues: MYYPLSSSLMFFILFSLFYHLPCESSKCESLFQCGNITASFPFWGGDRHKHCGHPLLELRCDQNKSTSLFISDQEFFVLHVDQTSYSLTLARPDLLHSFCSLTFTNTTLPPEIFELSPAYKSVTFYHCYPVLPDLSNYTCPVIGPISVSGNPEDHETCFPNFAANVPTSFVTKEKKLNIANLESVLEKGFEVNMNVIMKACQACSYSNESCGFDENFPFEVKCKPHHSPTDTSLSIGAKAGIAVASVSGLAILLLAGLFLCIRRRRKTQDAQYTSKSLPITSYSSRDTSRNPTSTTISSSSNHSLLPSISNLANRSDYCGVQVFSYEELEEATENFSRELGDGGFGTVYYGVLKDGRAVAVKRLYERSLKRVEQFKNEIEILKSLKHPNLVILYGCTSRHSRELLLVYEYISNGTLAEHLHGNRAEARPLCWSTRLNIAIETASALSFLHIKGIIHRDIKTTNILLDDNYQVKVADFGLSRLFPMDQTHISTAPQGTPGYVDPEYYQCYQLNEKSDVYSFGVVLTELISSKEAVDITRHRHDINLANMAVSKIQNNALHELVDSSLGYDNDPEVRRKMMAVAELAFRCLQQERDVRPAMDEIVEILRGIKDDEKKRVLVKSPDVVDIECGGGDDVGLLRNSVPPPISPETDKWTSSSDTAASL.

Positions 1–25 (MYYPLSSSLMFFILFSLFYHLPCES) are cleaved as a signal peptide. Topologically, residues 26 to 241 (SKCESLFQCG…TSLSIGAKAG (216 aa)) are extracellular. N-linked (GlcNAc...) asparagine glycans are attached at residues Asn-36, Asn-64, Asn-106, Asn-137, and Asn-208. The helical transmembrane segment at 242–262 (IAVASVSGLAILLLAGLFLCI) threads the bilayer. The Cytoplasmic portion of the chain corresponds to 263 to 663 (RRRRKTQDAQ…TSSSDTAASL (401 aa)). The segment at 282-304 (SYSSRDTSRNPTSTTISSSSNHS) is disordered. The span at 290-304 (RNPTSTTISSSSNHS) shows a compositional bias: low complexity. Positions 334–609 (ENFSRELGDG…DEIVEILRGI (276 aa)) constitute a Protein kinase domain. ATP is bound by residues 340 to 348 (LGDGGFGTV) and Lys-362. The Proton acceptor role is filled by Asp-458. The tract at residues 637–663 (LLRNSVPPPISPETDKWTSSSDTAASL) is disordered. Polar residues predominate over residues 653 to 663 (WTSSSDTAASL).

The protein belongs to the protein kinase superfamily. Ser/Thr protein kinase family.

It localises to the cell membrane. The enzyme catalyses L-seryl-[protein] + ATP = O-phospho-L-seryl-[protein] + ADP + H(+). It catalyses the reaction L-threonyl-[protein] + ATP = O-phospho-L-threonyl-[protein] + ADP + H(+). This chain is LEAF RUST 10 DISEASE-RESISTANCE LOCUS RECEPTOR-LIKE PROTEIN KINASE-like 1.4, found in Arabidopsis thaliana (Mouse-ear cress).